The primary structure comprises 159 residues: 2-C-methyl-D-erythritol 2,4-cyclodiphosphate synthase (159 aa).

A divalent metal cation-binding residues include D8 and H10. 4-CDP-2-C-methyl-D-erythritol 2-phosphate-binding positions include 8–10 (DVH) and 34–35 (HS). H42 contacts a divalent metal cation. 4-CDP-2-C-methyl-D-erythritol 2-phosphate is bound by residues 56–58 (DIG), 100–106 (AQAPKMA), 132–135 (TTTE), F139, and R142.

This sequence belongs to the IspF family. In terms of assembly, homotrimer. Requires a divalent metal cation as cofactor.

It carries out the reaction 4-CDP-2-C-methyl-D-erythritol 2-phosphate = 2-C-methyl-D-erythritol 2,4-cyclic diphosphate + CMP. It functions in the pathway isoprenoid biosynthesis; isopentenyl diphosphate biosynthesis via DXP pathway; isopentenyl diphosphate from 1-deoxy-D-xylulose 5-phosphate: step 4/6. Functionally, involved in the biosynthesis of isopentenyl diphosphate (IPP) and dimethylallyl diphosphate (DMAPP), two major building blocks of isoprenoid compounds. Catalyzes the conversion of 4-diphosphocytidyl-2-C-methyl-D-erythritol 2-phosphate (CDP-ME2P) to 2-C-methyl-D-erythritol 2,4-cyclodiphosphate (ME-CPP) with a corresponding release of cytidine 5-monophosphate (CMP). In Marinobacter nauticus (strain ATCC 700491 / DSM 11845 / VT8) (Marinobacter aquaeolei), this protein is 2-C-methyl-D-erythritol 2,4-cyclodiphosphate synthase.